Here is a 332-residue protein sequence, read N- to C-terminus: Glycerol-3-phosphate dehydrogenase [NAD(P)+] (332 aa).

Ser-15, Trp-16, and Lys-110 together coordinate NADPH. Sn-glycerol 3-phosphate-binding residues include Lys-110, Gly-137, and Ser-139. Position 141 (Ala-141) interacts with NADPH. Sn-glycerol 3-phosphate-binding residues include Lys-192, Asp-245, Ser-255, Arg-256, and Asn-257. Catalysis depends on Lys-192, which acts as the Proton acceptor. Arg-256 contacts NADPH. Residue Glu-282 participates in NADPH binding.

It belongs to the NAD-dependent glycerol-3-phosphate dehydrogenase family.

It is found in the cytoplasm. It carries out the reaction sn-glycerol 3-phosphate + NAD(+) = dihydroxyacetone phosphate + NADH + H(+). The catalysed reaction is sn-glycerol 3-phosphate + NADP(+) = dihydroxyacetone phosphate + NADPH + H(+). It functions in the pathway membrane lipid metabolism; glycerophospholipid metabolism. Its function is as follows. Catalyzes the reduction of the glycolytic intermediate dihydroxyacetone phosphate (DHAP) to sn-glycerol 3-phosphate (G3P), the key precursor for phospholipid synthesis. This Coxiella burnetii (strain CbuK_Q154) (Coxiella burnetii (strain Q154)) protein is Glycerol-3-phosphate dehydrogenase [NAD(P)+].